A 209-amino-acid polypeptide reads, in one-letter code: Lysine-rich arabinogalactan protein 18 (209 aa).

The signal sequence occupies residues 1–21 (MDRNFLLTVTLICIVVAGVGG). Residues 21–185 (GQSPISSPTK…PSADDQSGAA (165 aa)) are disordered. Positions 23–79 (SPISSPTKSPTTPSAPTTSPTKSPAVTSPTTAPAKTPTASASSPVESPKSPAPVSES) are enriched in low complexity. Composition is skewed to pro residues over residues 80–95 (SPPP…PVPA) and 103–119 (SSPP…PAPV). A compositionally biased stretch (basic residues) spans 132–145 (SKHKKTTKKSKKHQ). Residues 149 to 164 (APAPELLGPPAPPTES) are compositionally biased toward pro residues. The GPI-anchor amidated glycine moiety is linked to residue Gly-183. The propeptide at 184-209 (AASTRVLRNVAVGAVATAWAVLVMAF) is removed in mature form.

This sequence belongs to the lysine-rich AGP family. Post-translationally, O-glycosylated on the hydroxyproline residues. As to expression, predominantly expressed in flowers, and moderately expressed in roots, stems and young leaves.

It is found in the cell membrane. In terms of biological role, proteoglycan that seems to be implicated in diverse developmental roles such as differentiation, cell-cell recognition, embryogenesis and programmed cell death. This chain is Lysine-rich arabinogalactan protein 18 (AGP18), found in Arabidopsis thaliana (Mouse-ear cress).